A 123-amino-acid chain; its full sequence is UPF0482 protein YE2026 (123 aa).

The signal sequence occupies residues M1 to A31. Residues G47 to D66 form a disordered region.

This sequence belongs to the UPF0482 family.

The protein is UPF0482 protein YE2026 of Yersinia enterocolitica serotype O:8 / biotype 1B (strain NCTC 13174 / 8081).